The primary structure comprises 98 residues: uncharacterized protein (98 aa).

A signal peptide spans 1–23 (MKYVALAFVLSLVILQISAQVGA).

As to expression, nacreous layer of shell (at protein level). Expressed primarily in the mantle with highest level in the mantle pallium and lower level in the mantle edge.

Its subcellular location is the secreted. This is an uncharacterized protein from Pinctada maxima (Silver-lipped pearl oyster).